We begin with the raw amino-acid sequence, 870 residues long: MSTQQTMTVDEHINQLVAKAQVALKEYLKPEYTQEKIDYIVKKASVAALDQHCALAAAAVEETGRGIFEDKATKNIFACEHVTHEMRHAKTVGIINVDPLYGITEIAEPVGVVCGVTPVTNPTSTAIFKSLISIKTRNPIVFSFHPSALKCSIMAAKIVRDAAISAGAPENCIQWIEFGGIEASNKLMNHPGVATILATGGNAMVKAAYSSGKPALGVGAGNVPTYIEKTCNIKQAANDVVMSKSFDNGMICASEQAAIIDKEIYDQVVEEMKTLGAYFINEEEKAKLEKFMFGVNAYSADVNNARLNPKCPGMSPQWFAEQVGIKVPEDCNIICAVCKEVGPNEPLTREKLSPVLAILKAENTQDGIDKAEAMVEFNGRGHSAAIHSNDKAVVEKYALTMKACRILHNTPSSQGGIGSIYNYIWPSFTLGCGSYGGNSVSANVTYHNLLNIKRLADRRNNLQWFRVPPKIFFEPHSIRYLAELKELSKIFIVSDRMMYKLGYVDRVMDVLKRRSNEVEIEIFIDVEPDPSIQTVQKGLAVMNTFGPDNIIAIGGGSAMDAAKIMWLLYEHPEADFFAMKQKFIDLRKRAFKFPTMGKKARLICIPTTSGTGSEVTPFAVISDHETGKKYPLADYSLTPSVAIVDPMFTMSLPKRAIADTGLDVLVHATEAYVSVMANEYTDGLAREAVKLVFENLLKSYNGDLEAREKMHNAATIAGMAFASAFLGMDHSMAHKVGAAFHLPHGRCVAVLLPHVIRYNGQKPRKLAMWPKYNFYKADQRYMELAQMVGLKCNTPAEGVEAFAKACEELMKATETITGFKQANIDEAAWMSKVPEMALLAFEDQCSPANPRVPMVKDMEKILKAAYYPIA.

Cys252 is an active-site residue. 431–436 serves as a coordination point for NAD(+); the sequence is GCGSYG.

The protein in the N-terminal section; belongs to the aldehyde dehydrogenase family. It in the C-terminal section; belongs to the iron-containing alcohol dehydrogenase family. As to quaternary structure, seems to form a rod shaped homomer composed of at least 20 identical subunits. Zn(2+) is required as a cofactor. The cofactor is Fe(2+).

The enzyme catalyses a primary alcohol + NAD(+) = an aldehyde + NADH + H(+). The catalysed reaction is a secondary alcohol + NAD(+) = a ketone + NADH + H(+). It catalyses the reaction acetaldehyde + NAD(+) + CoA = acetyl-CoA + NADH + H(+). This enzyme has two NAD(+)-dependent activities: ADH and ACDH. May be a critical enzyme in the fermentative pathway. This Entamoeba histolytica (strain ATCC 30459 / HM-1:IMSS / ABRM) protein is Aldehyde-alcohol dehydrogenase 2 (ADH2).